Here is a 111-residue protein sequence, read N- to C-terminus: Large ribosomal subunit protein eL31 (111 aa).

This sequence belongs to the eukaryotic ribosomal protein eL31 family.

The protein is Large ribosomal subunit protein eL31 (RPL31) of Tetrahymena thermophila (strain SB210).